Consider the following 1571-residue polypeptide: Disco-interacting protein 2 homolog A (1571 aa).

One can recognise a DMAP1-binding domain in the interval 9–127 (EAAPLPAEVR…KRRSVLVHSS (119 aa)). The tract at residues 60–203 (LQAENRIPGP…APSAAATPGA (144 aa)) is disordered. A compositionally biased stretch (basic and acidic residues) spans 86 to 98 (ASRDERFRSDVHT). At S94 the chain carries Phosphoserine. Composition is skewed to polar residues over residues 127–139 (SVET…TSSA) and 152–162 (LTSTPLQSHSS). T132 and T155 each carry phosphothreonine. Positions 174–203 (SSTSSSASSTSSHPGGRPTTAPSAAATPGA) are enriched in low complexity. 2 consecutive short sequence motifs (PXXP motif; required for interaction with CTTN) follow at residues 283–286 (PKRP) and 307–310 (PNQP). Residues 302–327 (VQQPDPNQPKPEGSETSVLRGEPLTA) form a disordered region.

It belongs to the DIP2 family. As to quaternary structure, interacts with FSTL1; DIP2A may act as a cell surface receptor for FSTL1. Interacts (via N-terminus) with CTTN (via SH3 domain); the interaction promotes acetylation of CTTN and is required for proper synaptic transmission. Interacts with SHANK3. Low expression in all tissues tested.

Its subcellular location is the cell membrane. The protein resides in the mitochondrion. It is found in the cell projection. It localises to the dendritic spine. It catalyses the reaction acetate + ATP + CoA = acetyl-CoA + AMP + diphosphate. In terms of biological role, catalyzes the de novo synthesis of acetyl-CoA in vitro. Promotes acetylation of CTTN, possibly by providing the acetyl donor, ensuring correct dendritic spine morphology and synaptic transmission. Binds to follistatin-related protein FSTL1 and may act as a cell surface receptor for FSTL1, contributing to AKT activation and subsequent FSTL1-induced survival and function of endothelial cells and cardiac myocytes. The sequence is that of Disco-interacting protein 2 homolog A (DIP2A) from Homo sapiens (Human).